Consider the following 393-residue polypeptide: Small RNA 2'-O-methyltransferase (393 aa).

S-adenosyl-L-methionine-binding residues include Tyr-36, Gly-55, Asp-78, Lys-83, Val-115, and Ile-131. Mg(2+) contacts are provided by Glu-132, Glu-135, His-136, and His-181. The tract at residues 286 to 307 (HLPRRKEQAGERGDKPKDIGGS) is disordered. The span at 290–305 (RKEQAGERGDKPKDIG) shows a compositional bias: basic and acidic residues.

The protein belongs to the methyltransferase superfamily. HEN1 family. Mg(2+) serves as cofactor.

It localises to the cytoplasm. The catalysed reaction is small RNA 3'-end nucleotide + S-adenosyl-L-methionine = small RNA 3'-end 2'-O-methylnucleotide + S-adenosyl-L-homocysteine + H(+). Methyltransferase that adds a 2'-O-methyl group at the 3'-end of piRNAs, a class of 24 to 30 nucleotide RNAs that are generated by a Dicer-independent mechanism and are primarily derived from transposons and other repeated sequence elements. This probably protects the 3'-end of piRNAs from uridylation activity and subsequent degradation. Stabilization of piRNAs is essential for gametogenesis. This Homo sapiens (Human) protein is Small RNA 2'-O-methyltransferase (HENMT1).